Reading from the N-terminus, the 313-residue chain is Ribosomal RNA small subunit methyltransferase H (313 aa).

S-adenosyl-L-methionine contacts are provided by residues 35–37 (GGH), aspartate 55, phenylalanine 79, aspartate 101, and glutamine 108.

Belongs to the methyltransferase superfamily. RsmH family.

It localises to the cytoplasm. The catalysed reaction is cytidine(1402) in 16S rRNA + S-adenosyl-L-methionine = N(4)-methylcytidine(1402) in 16S rRNA + S-adenosyl-L-homocysteine + H(+). Specifically methylates the N4 position of cytidine in position 1402 (C1402) of 16S rRNA. This is Ribosomal RNA small subunit methyltransferase H from Salmonella paratyphi A (strain ATCC 9150 / SARB42).